The sequence spans 575 residues: Regulatory protein zeste (575 aa).

Gly residues predominate over residues 1–26; it reads MSAQGEGGGAGGSGGGGAGSDGGGNA. Disordered regions lie at residues 1–53 and 151–174; these read MSAQ…LPLT and SVASAVPQQQQQQHHQQHDSVKVE. The interval 2-47 is hydrophobic; that stretch reads SAQGEGGGAGGSGGGGAGSDGGGNAGQSSTGSGTVAVTNGGNSSAK. Positions 31 to 51 are enriched in polar residues; that stretch reads TGSGTVAVTNGGNSSAKNQLP. A DNA-binding region spans residues 48–128; that stretch reads NQLPLTPRFT…WLNSRLRKQY (81 aa). Residues 151–164 show a composition bias toward low complexity; sequence SVASAVPQQQQQQH.

Self-associates forming complexes of several hundred monomers.

The protein resides in the nucleus. Functionally, involved in transvection phenomena (= synapsis-dependent gene expression), where the synaptic pairing of chromosomes carrying genes with which zeste interacts influences the expression of these genes. Zeste binds to DNA and stimulates transcription from a nearby promoter. In Drosophila melanogaster (Fruit fly), this protein is Regulatory protein zeste (z).